We begin with the raw amino-acid sequence, 630 residues long: MDLTQIQNPSFLKDMSISELEGLSEDIRKFLIEELSQTGGHIAPNLGVVELTIALHKLFDSPKDKFLWDVGHQSYVHKILTGRAKEFGTLRQYQGLCGFPKRCESEHDVWETGHSSTSLSAAMGMALARDLKKTKEYVIPIIGDGALTGGMALEALNHIGHEKTDMIVILNDNEMSIAPNVGALHNVLGRLRTAGKYHWVKDELEYILKKIPAVGGKVAATAEKIKDSLKYLLVSGVFFEELGFTYLGPVDGHDYEKLFETLQYAKKTKGPVLVHVITKKGKGYKPAESDVIGTWHGTGPYKIESGDFVKPKEVAPAWSAVVSETVLKLARTDERIVAITPAMPVGSKLEKFQKEFPDRMIDVGIAEQHATTMAAGMATQGMKPFLAIYSTFLQRAYDQVVHDICRQNLNVFIGIDRSGLVGADGETHQGVFDISFLRHLPNMVIMMPKDENEGQHLVYTAMQYEDGPIALRYARGNGLGVHMDEELKAIPIGSWETLKEGTQAAILTFGTTIPMAMEAAERLEKAGVSVKVVNARFIKPMDEAYLHDLLGKNIPILTIEEACLIGGFGTGVVEFASENGYHSALVERMGIPDRFIEHGSVTKLLEEIGLTTDAVVDRIHTMIPSKQKRA.

Thiamine diphosphate is bound by residues His-72 and 113–115; that span reads GHS. Residue Asp-144 coordinates Mg(2+). Residues 145 to 146, Asn-173, Tyr-284, and Glu-367 contribute to the thiamine diphosphate site; that span reads GA. Residue Asn-173 participates in Mg(2+) binding.

Belongs to the transketolase family. DXPS subfamily. In terms of assembly, homodimer. Mg(2+) is required as a cofactor. Thiamine diphosphate serves as cofactor.

The catalysed reaction is D-glyceraldehyde 3-phosphate + pyruvate + H(+) = 1-deoxy-D-xylulose 5-phosphate + CO2. It functions in the pathway metabolic intermediate biosynthesis; 1-deoxy-D-xylulose 5-phosphate biosynthesis; 1-deoxy-D-xylulose 5-phosphate from D-glyceraldehyde 3-phosphate and pyruvate: step 1/1. Catalyzes the acyloin condensation reaction between C atoms 2 and 3 of pyruvate and glyceraldehyde 3-phosphate to yield 1-deoxy-D-xylulose-5-phosphate (DXP). This Bacillus cereus (strain AH820) protein is 1-deoxy-D-xylulose-5-phosphate synthase.